A 228-amino-acid polypeptide reads, in one-letter code: MLHVEMLTLLFLVLWMCVFSQDPGSKVVADRYAVYWNSSNPRFQRGDYHIDVCINDYLDVFCPHYEDSVPEDKTERYVLYMVNFDGYSACDHTSKGFKRWECNRPHSPNGPLKFSEKFQLFTPFSLGFEFRPGREYFYISSAIPDNGRRSCLKLKVFVRPTNSCMKTIGVRDRVFDVNDKVENSLEPADDTVHESAEPSRGENAAQTPRIPSRLLAILLFLLAMLLTL.

Positions 1–20 (MLHVEMLTLLFLVLWMCVFS) are cleaved as a signal peptide. The Ephrin RBD domain maps to 29 to 162 (ADRYAVYWNS…KLKVFVRPTN (134 aa)). N37 carries N-linked (GlcNAc...) asparagine glycosylation. 2 disulfide bridges follow: C62–C102 and C90–C151. The segment at 186–205 (EPADDTVHESAEPSRGENAA) is disordered. Basic and acidic residues predominate over residues 190–200 (DTVHESAEPSR). N203 carries the GPI-anchor amidated asparagine lipid modification. Positions 204–228 (AAQTPRIPSRLLAILLFLLAMLLTL) are cleaved as a propeptide — removed in mature form.

The protein belongs to the ephrin family. Binds to the receptor tyrosine kinases EPHA2, EPHA3, EPHB1 and EPHB2. Interacts with EPHA8; activates EPHA8. Forms a ternary EFNA5-EPHA3-ADAM10 complex mediating EFNA5 extracellular domain shedding by ADAM10 which regulates the EFNA5-EPHA3 complex internalization and function. As to expression, expressed in brain, heart, placenta and lung.

It localises to the cell membrane. Its subcellular location is the membrane. The protein localises to the caveola. Its function is as follows. Cell surface GPI-bound ligand for Eph receptors, a family of receptor tyrosine kinases which are crucial for migration, repulsion and adhesion during neuronal, vascular and epithelial development. Binds promiscuously Eph receptors residing on adjacent cells, leading to contact-dependent bidirectional signaling into neighboring cells. The signaling pathway downstream of the receptor is referred to as forward signaling while the signaling pathway downstream of the ephrin ligand is referred to as reverse signaling. Induces compartmentalized signaling within a caveolae-like membrane microdomain when bound to the extracellular domain of its cognate receptor. This signaling event requires the activity of the Fyn tyrosine kinase. Activates the EPHA3 receptor to regulate cell-cell adhesion and cytoskeletal organization. With the receptor EPHA2 may regulate lens fiber cells shape and interactions and be important for lens transparency maintenance. May function actively to stimulate axon fasciculation. The interaction of EFNA5 with EPHA5 also mediates communication between pancreatic islet cells to regulate glucose-stimulated insulin secretion. Cognate/functional ligand for EPHA7, their interaction regulates brain development modulating cell-cell adhesion and repulsion. In Rattus norvegicus (Rat), this protein is Ephrin-A5 (Efna5).